The following is a 1060-amino-acid chain: Positive regulator of purine utilization (1060 aa).

The span at 1–15 shows a compositional bias: polar residues; that stretch reads MLNPSTSDIHTSPTA. Residues 1–48 form a disordered region; sequence MLNPSTSDIHTSPTAVGNGRKRPHPIADSGSAMPSDPSAQQLPHPANE. Residues 67–94 constitute a DNA-binding region (zn(2)-C6 fungal-type); sequence CNRCRQRKNRCDQRLPRCQACEKAGVRC. 5 disordered regions span residues 163–207, 251–282, 367–391, 811–862, and 877–969; these read EIAA…DAED, SVPG…TTRD, AEDQ…SRQY, VQTS…RFDM, and RQGS…PSGM. 3 stretches are compositionally biased toward basic and acidic residues: residues 170–182, 189–207, and 260–269; these read SNDK…KEKN, KASR…DAED, and GPSRPKERLP. Polar residues predominate over residues 272 to 282; that stretch reads ATGTEGSTTRD. Over residues 367 to 377 the composition is skewed to basic and acidic residues; the sequence is AEDQKEGRDHS. The span at 811 to 831 shows a compositional bias: polar residues; it reads VQTSTSGSRQFNATQSRSRPY. 2 stretches are compositionally biased toward low complexity: residues 832–859 and 930–952; these read SRQQ…PLPR and PRYY…AASG.

The protein resides in the nucleus. Mediates the induction of a number of unlinked genes involved in purine utilization. Binds to the consensus sequence 5'-TCGGNNNNNNCCGA-3'. The polypeptide is Positive regulator of purine utilization (uaY) (Emericella nidulans (strain FGSC A4 / ATCC 38163 / CBS 112.46 / NRRL 194 / M139) (Aspergillus nidulans)).